The sequence spans 96 residues: Small ribosomal subunit protein bS20 (96 aa).

It belongs to the bacterial ribosomal protein bS20 family.

In terms of biological role, binds directly to 16S ribosomal RNA. This is Small ribosomal subunit protein bS20 from Anaplasma phagocytophilum (strain HZ).